Reading from the N-terminus, the 211-residue chain is Large ribosomal subunit protein uL3 (211 aa).

The protein belongs to the universal ribosomal protein uL3 family. As to quaternary structure, part of the 50S ribosomal subunit. Forms a cluster with proteins L14 and L19.

Functionally, one of the primary rRNA binding proteins, it binds directly near the 3'-end of the 23S rRNA, where it nucleates assembly of the 50S subunit. This is Large ribosomal subunit protein uL3 from Geobacter sp. (strain M21).